A 32-amino-acid chain; its full sequence is MTSISDGQIVVALISAFIIVILASRLGKELYQ.

Residues 3–23 (SISDGQIVVALISAFIIVILA) form a helical membrane-spanning segment.

This sequence belongs to the PsaM family.

It is found in the plastid. It localises to the chloroplast thylakoid membrane. The protein is Photosystem I reaction center subunit XII of Anthoceros angustus (Hornwort).